We begin with the raw amino-acid sequence, 150 residues long: Small ribosomal subunit protein uS13 (150 aa).

This sequence belongs to the universal ribosomal protein uS13 family. As to quaternary structure, part of the 30S ribosomal subunit. Forms a loose heterodimer with protein S19. Forms two bridges to the 50S subunit in the 70S ribosome.

Located at the top of the head of the 30S subunit, it contacts several helices of the 16S rRNA. In the 70S ribosome it contacts the 23S rRNA (bridge B1a) and protein L5 of the 50S subunit (bridge B1b), connecting the 2 subunits; these bridges are implicated in subunit movement. The polypeptide is Small ribosomal subunit protein uS13 (Methanocorpusculum labreanum (strain ATCC 43576 / DSM 4855 / Z)).